We begin with the raw amino-acid sequence, 389 residues long: Phospho-N-acetylmuramoyl-pentapeptide-transferase (389 aa).

A run of 10 helical transmembrane segments spans residues 25–45, 73–93, 97–117, 135–155, 190–210, 222–242, 258–278, 286–306, 311–331, and 366–386; these read RAVM…PWVI, TMGG…WGDL, FIWI…VDDY, FWQS…VSEA, ISYP…IVGA, GLVI…AYVM, GAGE…AFLW, VFMG…VAVI, IVLF…MLQV, and QVVV…LSTL.

This sequence belongs to the glycosyltransferase 4 family. MraY subfamily. Requires Mg(2+) as cofactor.

The protein localises to the cell inner membrane. The catalysed reaction is UDP-N-acetyl-alpha-D-muramoyl-L-alanyl-gamma-D-glutamyl-meso-2,6-diaminopimeloyl-D-alanyl-D-alanine + di-trans,octa-cis-undecaprenyl phosphate = di-trans,octa-cis-undecaprenyl diphospho-N-acetyl-alpha-D-muramoyl-L-alanyl-D-glutamyl-meso-2,6-diaminopimeloyl-D-alanyl-D-alanine + UMP. The protein operates within cell wall biogenesis; peptidoglycan biosynthesis. In terms of biological role, catalyzes the initial step of the lipid cycle reactions in the biosynthesis of the cell wall peptidoglycan: transfers peptidoglycan precursor phospho-MurNAc-pentapeptide from UDP-MurNAc-pentapeptide onto the lipid carrier undecaprenyl phosphate, yielding undecaprenyl-pyrophosphoryl-MurNAc-pentapeptide, known as lipid I. The sequence is that of Phospho-N-acetylmuramoyl-pentapeptide-transferase from Burkholderia pseudomallei (strain 1106a).